A 565-amino-acid chain; its full sequence is Dihydroxy-acid dehydratase (565 aa).

Cys-53 lines the [2Fe-2S] cluster pocket. Asp-85 contacts Mg(2+). Cys-126 contributes to the [2Fe-2S] cluster binding site. Mg(2+)-binding residues include Asp-127 and Lys-128. Position 128 is an N6-carboxylysine (Lys-128). Residue Cys-198 coordinates [2Fe-2S] cluster. Glu-450 is a Mg(2+) binding site. Catalysis depends on Ser-476, which acts as the Proton acceptor.

The protein belongs to the IlvD/Edd family. In terms of assembly, homodimer. [2Fe-2S] cluster serves as cofactor. It depends on Mg(2+) as a cofactor.

The enzyme catalyses (2R)-2,3-dihydroxy-3-methylbutanoate = 3-methyl-2-oxobutanoate + H2O. It carries out the reaction (2R,3R)-2,3-dihydroxy-3-methylpentanoate = (S)-3-methyl-2-oxopentanoate + H2O. The protein operates within amino-acid biosynthesis; L-isoleucine biosynthesis; L-isoleucine from 2-oxobutanoate: step 3/4. Its pathway is amino-acid biosynthesis; L-valine biosynthesis; L-valine from pyruvate: step 3/4. Functionally, functions in the biosynthesis of branched-chain amino acids. Catalyzes the dehydration of (2R,3R)-2,3-dihydroxy-3-methylpentanoate (2,3-dihydroxy-3-methylvalerate) into 2-oxo-3-methylpentanoate (2-oxo-3-methylvalerate) and of (2R)-2,3-dihydroxy-3-methylbutanoate (2,3-dihydroxyisovalerate) into 2-oxo-3-methylbutanoate (2-oxoisovalerate), the penultimate precursor to L-isoleucine and L-valine, respectively. The sequence is that of Dihydroxy-acid dehydratase from Synechococcus sp. (strain JA-2-3B'a(2-13)) (Cyanobacteria bacterium Yellowstone B-Prime).